Reading from the N-terminus, the 636-residue chain is ATP-dependent zinc metalloprotease FtsH 1 (636 aa).

Over 1–18 the chain is Cytoplasmic; it reads MKLSPPKKNLPPQKNNEP. Residues 19–39 form a helical membrane-spanning segment; it reads PFPYLRLLVQVGIALFLVWIW. Residues 40-126 are Periplasmic-facing; the sequence is QESLHKATVS…YGSVKPSLLS (87 aa). The chain crosses the membrane as a helical span at residues 127–147; sequence QILFSWVVPILIFFLVWFALA. The Cytoplasmic portion of the chain corresponds to 148-636; the sequence is RFMGGGGAGY…KEAPSYSSTL (489 aa). Position 220–227 (220–227) interacts with ATP; it reads GPPGTGKT. Histidine 442 lines the Zn(2+) pocket. Residue glutamate 443 is part of the active site. The Zn(2+) site is built by histidine 446 and aspartate 519.

It in the central section; belongs to the AAA ATPase family. In the C-terminal section; belongs to the peptidase M41 family. Homohexamer. Requires Zn(2+) as cofactor.

The protein resides in the cell inner membrane. Acts as a processive, ATP-dependent zinc metallopeptidase for both cytoplasmic and membrane proteins. Plays a role in the quality control of integral membrane proteins. This Methylacidiphilum infernorum (isolate V4) (Methylokorus infernorum (strain V4)) protein is ATP-dependent zinc metalloprotease FtsH 1.